Here is a 227-residue protein sequence, read N- to C-terminus: Probable FKBP-type 25 kDa peptidyl-prolyl cis-trans isomerase (227 aa).

Positions 144–227 (ATQVHVRYRG…VFEIDLLGFR (84 aa)) constitute a PPIase FKBP-type domain.

This sequence belongs to the FKBP-type PPIase family.

It catalyses the reaction [protein]-peptidylproline (omega=180) = [protein]-peptidylproline (omega=0). Functionally, PPIases accelerate the folding of proteins. The polypeptide is Probable FKBP-type 25 kDa peptidyl-prolyl cis-trans isomerase (fkl) (Pseudomonas aeruginosa (strain ATCC 15692 / DSM 22644 / CIP 104116 / JCM 14847 / LMG 12228 / 1C / PRS 101 / PAO1)).